The chain runs to 917 residues: Protein translocase subunit SecA 1 (917 aa).

ATP contacts are provided by residues Gln-87, Gly-105–Thr-109, and Asp-507. A disordered region spans residues Glu-866–Asn-917. Residues Cys-901, Cys-903, Cys-912, and His-913 each coordinate Zn(2+). Residues Lys-907–Asn-917 are compositionally biased toward basic residues.

This sequence belongs to the SecA family. As to quaternary structure, monomer and homodimer. Part of the essential Sec protein translocation apparatus which comprises SecA, SecYEG and auxiliary proteins SecDF-YajC and YidC. Requires Zn(2+) as cofactor.

It localises to the cell inner membrane. The protein resides in the cytoplasm. It carries out the reaction ATP + H2O + cellular proteinSide 1 = ADP + phosphate + cellular proteinSide 2.. Its function is as follows. Part of the Sec protein translocase complex. Interacts with the SecYEG preprotein conducting channel. Has a central role in coupling the hydrolysis of ATP to the transfer of proteins into and across the cell membrane, serving both as a receptor for the preprotein-SecB complex and as an ATP-driven molecular motor driving the stepwise translocation of polypeptide chains across the membrane. The sequence is that of Protein translocase subunit SecA 1 from Nitrosospira multiformis (strain ATCC 25196 / NCIMB 11849 / C 71).